We begin with the raw amino-acid sequence, 407 residues long: 1-deoxy-D-xylulose 5-phosphate reductoisomerase (407 aa).

Thr-25, Gly-26, Ser-27, Ile-28, Asn-53, and Asn-136 together coordinate NADPH. Position 137 (Lys-137) interacts with 1-deoxy-D-xylulose 5-phosphate. Residue Glu-138 coordinates NADPH. Asp-162 is a Mn(2+) binding site. Residues Ser-163, Glu-164, Ser-188, and His-211 each contribute to the 1-deoxy-D-xylulose 5-phosphate site. Position 164 (Glu-164) interacts with Mn(2+). Gly-217 serves as a coordination point for NADPH. Residues Ser-224, Asn-229, Lys-230, and Glu-233 each contribute to the 1-deoxy-D-xylulose 5-phosphate site. Residue Glu-233 coordinates Mn(2+).

It belongs to the DXR family. Mg(2+) is required as a cofactor. The cofactor is Mn(2+).

It catalyses the reaction 2-C-methyl-D-erythritol 4-phosphate + NADP(+) = 1-deoxy-D-xylulose 5-phosphate + NADPH + H(+). The protein operates within isoprenoid biosynthesis; isopentenyl diphosphate biosynthesis via DXP pathway; isopentenyl diphosphate from 1-deoxy-D-xylulose 5-phosphate: step 1/6. Its function is as follows. Catalyzes the NADPH-dependent rearrangement and reduction of 1-deoxy-D-xylulose-5-phosphate (DXP) to 2-C-methyl-D-erythritol 4-phosphate (MEP). This Rhodopseudomonas palustris (strain BisB5) protein is 1-deoxy-D-xylulose 5-phosphate reductoisomerase.